Consider the following 392-residue polypeptide: Arogenate dehydratase/prephenate dehydratase 1, chloroplastic (392 aa).

The transit peptide at 1 to 48 (MALRCFPIWVCPQTTHHRSPLMGLAEFDADKRRRFCLWECSSSASQRA) directs the protein to the chloroplast. The 176-residue stretch at 107-282 (RISFQGIPGA…NVTRFLILAR (176 aa)) folds into the Prephenate dehydratase domain. In terms of domain architecture, ACT spans 296 to 387 (SIVFSLEEGP…SFIRILGCYP (92 aa)).

In terms of tissue distribution, expressed in roots, leaves, stems, flowers and siliques.

The protein resides in the plastid. Its subcellular location is the chloroplast stroma. It catalyses the reaction L-arogenate + H(+) = L-phenylalanine + CO2 + H2O. The enzyme catalyses prephenate + H(+) = 3-phenylpyruvate + CO2 + H2O. Its pathway is amino-acid biosynthesis; L-phenylalanine biosynthesis; L-phenylalanine from L-arogenate: step 1/1. It participates in amino-acid biosynthesis; L-phenylalanine biosynthesis; phenylpyruvate from prephenate: step 1/1. Functionally, converts the prephenate produced from the shikimate-chorismate pathway into phenylalanine. Dehydratase that uses arogenate and prephenate as substrates. Utilzes more efficiently arogenate than prephenate. The polypeptide is Arogenate dehydratase/prephenate dehydratase 1, chloroplastic (Arabidopsis thaliana (Mouse-ear cress)).